Reading from the N-terminus, the 234-residue chain is Glutamine synthetase (234 aa).

In terms of domain architecture, GS catalytic spans 1–234; sequence KAQEPWFGIE…TRLLVETTLL (234 aa). Positions 126–157 are disordered; that stretch reads GSGGHVNFSNRQPESPPAGKQSRSSAKKLGKR.

Belongs to the glutamine synthetase family. Homooctamer.

The protein localises to the cytoplasm. The enzyme catalyses L-glutamate + NH4(+) + ATP = L-glutamine + ADP + phosphate + H(+). The sequence is that of Glutamine synthetase from Dunaliella salina (Green alga).